Consider the following 218-residue polypeptide: Pyridoxine/pyridoxamine 5'-phosphate oxidase (218 aa).

Residues 14–17 and Lys72 each bind substrate; that span reads RREY. FMN contacts are provided by residues 67-72, 82-83, Arg88, Lys89, and Gln111; these read RIVLLK and YT. Residues Tyr129, Arg133, and Ser137 each contribute to the substrate site. FMN-binding positions include 146-147 and Trp191; that span reads QS. 197–199 provides a ligand contact to substrate; it reads RLH. Residue Arg201 participates in FMN binding.

Belongs to the pyridoxamine 5'-phosphate oxidase family. As to quaternary structure, homodimer. It depends on FMN as a cofactor.

It catalyses the reaction pyridoxamine 5'-phosphate + O2 + H2O = pyridoxal 5'-phosphate + H2O2 + NH4(+). The enzyme catalyses pyridoxine 5'-phosphate + O2 = pyridoxal 5'-phosphate + H2O2. Its pathway is cofactor metabolism; pyridoxal 5'-phosphate salvage; pyridoxal 5'-phosphate from pyridoxamine 5'-phosphate: step 1/1. It functions in the pathway cofactor metabolism; pyridoxal 5'-phosphate salvage; pyridoxal 5'-phosphate from pyridoxine 5'-phosphate: step 1/1. Catalyzes the oxidation of either pyridoxine 5'-phosphate (PNP) or pyridoxamine 5'-phosphate (PMP) into pyridoxal 5'-phosphate (PLP). This Salmonella paratyphi B (strain ATCC BAA-1250 / SPB7) protein is Pyridoxine/pyridoxamine 5'-phosphate oxidase.